The following is a 265-amino-acid chain: Nitrogenase iron protein 2 (265 aa).

8–15 (GKGGIGKS) contacts ATP. Cysteine 91 is a binding site for [4Fe-4S] cluster. An ADP-ribosylarginine; by dinitrogenase reductase ADP-ribosyltransferase modification is found at arginine 94. Cysteine 126 provides a ligand contact to [4Fe-4S] cluster.

This sequence belongs to the NifH/BchL/ChlL family. Homodimer. [4Fe-4S] cluster serves as cofactor. In terms of processing, the reversible ADP-ribosylation of Arg-94 inactivates the nitrogenase reductase and regulates nitrogenase activity.

It catalyses the reaction N2 + 8 reduced [2Fe-2S]-[ferredoxin] + 16 ATP + 16 H2O = H2 + 8 oxidized [2Fe-2S]-[ferredoxin] + 2 NH4(+) + 16 ADP + 16 phosphate + 6 H(+). Its function is as follows. The key enzymatic reactions in nitrogen fixation are catalyzed by the nitrogenase complex, which has 2 components: the iron protein and the molybdenum-iron protein. This chain is Nitrogenase iron protein 2 (nifH2), found in Methanothermobacter thermautotrophicus (strain ATCC 29096 / DSM 1053 / JCM 10044 / NBRC 100330 / Delta H) (Methanobacterium thermoautotrophicum).